A 445-amino-acid polypeptide reads, in one-letter code: Proline--tRNA ligase (445 aa).

The protein belongs to the class-II aminoacyl-tRNA synthetase family. ProS type 2 subfamily. Homodimer.

Its subcellular location is the cytoplasm. The enzyme catalyses tRNA(Pro) + L-proline + ATP = L-prolyl-tRNA(Pro) + AMP + diphosphate. Its function is as follows. Catalyzes the attachment of proline to tRNA(Pro) in a two-step reaction: proline is first activated by ATP to form Pro-AMP and then transferred to the acceptor end of tRNA(Pro). In Dinoroseobacter shibae (strain DSM 16493 / NCIMB 14021 / DFL 12), this protein is Proline--tRNA ligase.